Consider the following 231-residue polypeptide: UPF0749 protein YlxW (231 aa).

Residues 1 to 34 form the signal peptide; sequence MRGKSAVLLSLIMLIAGFLISFSFQMTKENNKSA. A coiled-coil region spans residues 44 to 94; sequence YALRDELLKQEKENKKFEKELYQKQNKVRQAENKLKKEKSEYYNVLEDTEK.

Belongs to the UPF0749 family.

Functionally, may be involved in cell division and sporulation. This is UPF0749 protein YlxW (ylxW) from Bacillus subtilis (strain 168).